We begin with the raw amino-acid sequence, 324 residues long: Acetyl-coenzyme A carboxylase carboxyl transferase subunit alpha (324 aa).

The CoA carboxyltransferase C-terminal domain occupies 37 to 291; the sequence is KLDKRLDRLK…QEYVLQEWVK (255 aa).

This sequence belongs to the AccA family. Acetyl-CoA carboxylase is a heterohexamer composed of biotin carboxyl carrier protein (AccB), biotin carboxylase (AccC) and two subunits each of ACCase subunit alpha (AccA) and ACCase subunit beta (AccD).

It localises to the cytoplasm. The enzyme catalyses N(6)-carboxybiotinyl-L-lysyl-[protein] + acetyl-CoA = N(6)-biotinyl-L-lysyl-[protein] + malonyl-CoA. It functions in the pathway lipid metabolism; malonyl-CoA biosynthesis; malonyl-CoA from acetyl-CoA: step 1/1. In terms of biological role, component of the acetyl coenzyme A carboxylase (ACC) complex. First, biotin carboxylase catalyzes the carboxylation of biotin on its carrier protein (BCCP) and then the CO(2) group is transferred by the carboxyltransferase to acetyl-CoA to form malonyl-CoA. This chain is Acetyl-coenzyme A carboxylase carboxyl transferase subunit alpha, found in Chlamydia trachomatis serovar L2 (strain ATCC VR-902B / DSM 19102 / 434/Bu).